Here is a 726-residue protein sequence, read N- to C-terminus: Probable dipeptidyl-peptidase 5 (726 aa).

The N-terminal stretch at 1 to 19 (MAAAKWLIASLAFASSGLA) is a signal peptide. N-linked (GlcNAc...) asparagine glycans are attached at residues Asn-96 and Asn-252. The segment at 269-291 (AEPINKRNGPRTPQGIEGASSSP) is disordered. The active-site Charge relay system is Ser-558. The N-linked (GlcNAc...) asparagine glycan is linked to Asn-605. Catalysis depends on charge relay system residues Asp-641 and His-673. N-linked (GlcNAc...) asparagine glycosylation occurs at Asn-699.

The protein belongs to the peptidase S9C family.

The protein localises to the secreted. Extracellular dipeptidyl-peptidase which removes N-terminal dipeptides sequentially from polypeptides having unsubstituted N-termini. Contributes to pathogenicity. In Trichophyton verrucosum (strain HKI 0517), this protein is Probable dipeptidyl-peptidase 5 (DPP5).